The sequence spans 127 residues: Fluoride-specific ion channel FluC (127 aa).

The next 4 membrane-spanning stretches (helical) occupy residues 4-24, 35-55, 71-91, and 103-123; these read LLLA…LLSM, LGTL…FAWF, TGFC…VFLL, and VFVN…LFSA. Positions 75 and 78 each coordinate Na(+).

Belongs to the fluoride channel Fluc/FEX (TC 1.A.43) family.

It is found in the cell inner membrane. It carries out the reaction fluoride(in) = fluoride(out). Its activity is regulated as follows. Na(+) is not transported, but it plays an essential structural role and its presence is essential for fluoride channel function. Its function is as follows. Fluoride-specific ion channel. Important for reducing fluoride concentration in the cell, thus reducing its toxicity. The protein is Fluoride-specific ion channel FluC of Escherichia coli O17:K52:H18 (strain UMN026 / ExPEC).